The sequence spans 81 residues: uncharacterized protein (81 aa).

The next 2 helical transmembrane spans lie at 4–24 (IFKM…FNYT) and 61–81 (NIYT…LHII).

It localises to the cell membrane. This is an uncharacterized protein from Bacillus subtilis (strain 168).